Here is a 353-residue protein sequence, read N- to C-terminus: Phenol hydroxylase P5 protein (353 aa).

In terms of domain architecture, 2Fe-2S ferredoxin-type spans 3 to 93; that stretch reads YQVTIEPIGT…DMVIEADVDE (91 aa). Residues cysteine 37, cysteine 42, cysteine 45, and cysteine 77 each coordinate [2Fe-2S] cluster. One can recognise an FAD-binding FR-type domain in the interval 102–201; sequence VQDYQATVIE…SGPYGQFFVR (100 aa).

As to quaternary structure, the multicomponent enzyme phenol hydroxylase is formed by P0, P1, P2, P3, P4 and P5 polypeptides. FAD serves as cofactor. Requires [2Fe-2S] cluster as cofactor.

The enzyme catalyses phenol + NADPH + O2 + H(+) = catechol + NADP(+) + H2O. The protein operates within aromatic compound metabolism; phenol degradation. Functionally, catabolizes phenol, and some of its methylated derivatives. P5 is required for growth on phenol, and for in vitro phenol hydroxylase activity. In terms of biological role, probable electron transfer from NADPH, via FAD and the 2Fe-2S center, to the oxygenase activity site of the enzyme. This is Phenol hydroxylase P5 protein (mphP) from Acinetobacter pittii (strain PHEA-2).